A 188-amino-acid chain; its full sequence is Elongation factor P (188 aa).

Lysine 34 bears the N6-(3,6-diaminohexanoyl)-5-hydroxylysine mark.

The protein belongs to the elongation factor P family. Post-translationally, may be beta-lysylated on the epsilon-amino group of Lys-34 by the combined action of EpmA and EpmB, and then hydroxylated on the C5 position of the same residue by EpmC (if this protein is present). Lysylation is critical for the stimulatory effect of EF-P on peptide-bond formation. The lysylation moiety may extend toward the peptidyltransferase center and stabilize the terminal 3-CCA end of the tRNA. Hydroxylation of the C5 position on Lys-34 may allow additional potential stabilizing hydrogen-bond interactions with the P-tRNA.

The protein localises to the cytoplasm. The protein operates within protein biosynthesis; polypeptide chain elongation. Involved in peptide bond synthesis. Alleviates ribosome stalling that occurs when 3 or more consecutive Pro residues or the sequence PPG is present in a protein, possibly by augmenting the peptidyl transferase activity of the ribosome. Modification of Lys-34 is required for alleviation. The protein is Elongation factor P of Pectobacterium atrosepticum (strain SCRI 1043 / ATCC BAA-672) (Erwinia carotovora subsp. atroseptica).